Consider the following 607-residue polypeptide: Inactive metallocarboxypeptidase ECM14 (607 aa).

The N-terminal stretch at 1–21 (MRLFTHGQVLALLAFVNTISA) is a signal peptide. Positions 22-174 (IPSFSTNSYP…QTIYESYPSP (153 aa)) are excised as a propeptide. The region spanning 202-522 (NYQPLSVIVP…NAVMMLGRFL (321 aa)) is the Peptidase M14 domain. Zn(2+) is bound by residues His-264 and Glu-267. Residues 264 to 267 (HARE), Arg-322, and 339 to 340 (DR) contribute to the substrate site. Cys-333 and Cys-356 are joined by a disulfide. Asn-349 carries N-linked (GlcNAc...) asparagine glycosylation. Zn(2+) is bound at residue His-396. A substrate-binding site is contributed by 397–398 (SY). The tract at residues 539 to 607 (QRPNKDDKPI…GWGFRRLRKR (69 aa)) is disordered. Residues 550 to 571 (NDDDDDDNDDDDDDDDDADTND) show a composition bias toward acidic residues. Residues 573–590 (GIGRKDDSWVPDEYKGDN) show a composition bias toward basic and acidic residues.

It belongs to the peptidase M14 family. It depends on Zn(2+) as a cofactor.

The protein localises to the vacuole. The protein resides in the secreted. Inactive carboxypeptidase that may play a role in cell wall organization and biogenesis. The sequence is that of Inactive metallocarboxypeptidase ECM14 (ECM14) from Ajellomyces capsulatus (strain NAm1 / WU24) (Darling's disease fungus).